The primary structure comprises 31 residues: Kappa-theraphotoxin-Ps1b (31 aa).

Disulfide bonds link Cys2–Cys16, Cys9–Cys21, and Cys15–Cys25. Met31 carries the post-translational modification Methionine amide.

It belongs to the neurotoxin 30 (phrixotoxin) family. Expressed by the venom gland.

Its subcellular location is the secreted. In terms of biological role, potent and specific blocker of Kv4.2/KCND2 (IC(50)=34 nM) and Kv4.3/KCND3 (IC(50)=71 nM) potassium channels. Acts by altering the gating properties of these channels. This chain is Kappa-theraphotoxin-Ps1b, found in Paraphysa scrofa (Chilean copper tarantula).